Reading from the N-terminus, the 159-residue chain is Ribosomal RNA large subunit methyltransferase H (159 aa).

S-adenosyl-L-methionine is bound by residues leucine 76, glycine 108, and 127 to 132 (FGRLTL).

Belongs to the RNA methyltransferase RlmH family. In terms of assembly, homodimer.

It localises to the cytoplasm. It catalyses the reaction pseudouridine(1915) in 23S rRNA + S-adenosyl-L-methionine = N(3)-methylpseudouridine(1915) in 23S rRNA + S-adenosyl-L-homocysteine + H(+). Functionally, specifically methylates the pseudouridine at position 1915 (m3Psi1915) in 23S rRNA. The protein is Ribosomal RNA large subunit methyltransferase H of Listeria welshimeri serovar 6b (strain ATCC 35897 / DSM 20650 / CCUG 15529 / CIP 8149 / NCTC 11857 / SLCC 5334 / V8).